A 484-amino-acid chain; its full sequence is Iroquois-class homeodomain protein IRX-5 (484 aa).

Positions 112-174 (DPAYRKNATR…NARRRLKKEN (63 aa)) form a DNA-binding region, homeobox; TALE-type. 2 disordered regions span residues 176–393 (MTWT…QCPF) and 424–443 (GHPG…FNGL). Acidic residues predominate over residues 185 to 202 (EDEEEEENIDLEKNDEDE). Basic and acidic residues-rich tracts occupy residues 203 to 212 (PQKPEDKGDL) and 249 to 265 (SDFK…ELPR). Ser273 is subject to Phosphoserine. Residues 318 to 328 (SPPPPPPPPPA) show a composition bias toward pro residues. Residues 375 to 389 (SRASPAPAPARSPSA) show a composition bias toward low complexity. Residue Ser465 is modified to Phosphoserine.

Belongs to the TALE/IRO homeobox family. As to expression, not expressed in the developing metanephric kidney or adult kidney.

It is found in the nucleus. In terms of biological role, establishes the cardiac repolarization gradient by its repressive actions on the KCND2 potassium-channel gene. Required for retinal cone bipolar cell differentiation. May regulate contrast adaptation in the retina and control specific aspects of visual function in circuits of the mammalian retina. Involved in craniofacial and gonadal development. Modulates the migration of progenitor cell populations in branchial arches and gonads by repressing CXCL12. The protein is Iroquois-class homeodomain protein IRX-5 (Irx5) of Mus musculus (Mouse).